The primary structure comprises 115 residues: Urease subunit beta (115 aa).

The protein belongs to the urease beta subunit family. As to quaternary structure, heterotrimer of UreA (gamma), UreB (beta) and UreC (alpha) subunits. Three heterotrimers associate to form the active enzyme.

The protein resides in the cytoplasm. The enzyme catalyses urea + 2 H2O + H(+) = hydrogencarbonate + 2 NH4(+). It functions in the pathway nitrogen metabolism; urea degradation; CO(2) and NH(3) from urea (urease route): step 1/1. In Arthrobacter sp. (strain FB24), this protein is Urease subunit beta.